Here is a 121-residue protein sequence, read N- to C-terminus: Chorion class CA protein ERA.4 (121 aa).

Residues 1 to 23 (MSSSFFCFFLFCFQTCLIQNVYS) form the signal peptide. Residues 24-57 (QCLGRVGPGGPPLGPYGGPLGGPGYGPVGYGGCG) are left arm. The segment at 58 to 105 (GYGGSGIGNVAVAGELPVAGSAAVLGQVPVIGAVEFAGPACAVGSVSI) is central domain. The interval 106–121 (SGACGPTCGCGGSPYY) is right arm.

Belongs to the chorion protein family.

Its function is as follows. This protein is one of many from the eggshell of the silk moth. This Bombyx mori (Silk moth) protein is Chorion class CA protein ERA.4 (ERA.4).